The following is a 458-amino-acid chain: MPKRSNGSLVVRCAVSVVRFSKENVSCDLASENFTFSRDSFPVVSTVLRVSEAVYRMAAVASLGSALSVSSAALSQNVSVSNNATKESAFLGLRMGEVAKFGGALLSVSTVAANLKSKPGVLSVNAVTAPAETMNKPSSKKTATKSTCIITGASSGLGLATAKALADTGEWHVIMACRDFLKAERAARSVGIPKDSYTVIHCDLASFDSVRAFVDNFRRTERQLDVLVCNAAVYFPTDKEPKFSAEGFELSVGTNHMGHFLLARLLMEDLQKAKDSLKRMIIVGSITGNSNTVAGNVPPKANLGHLRGLAGGLNGVNSSSMIDGGEFDGAKAYKDSKVCNMFTMQEFHRRYHAETGITFSSLYPGCIAETGLFRNHVTLFRTLFPPFQKYITKGYVSEEEAGKRMAQVVSDPKLSKSGVYWSWNKDSGSFENELSEEASNPEKAKRLWELSERLSGLV.

Belongs to the short-chain dehydrogenases/reductases (SDR) family. POR subfamily.

Its subcellular location is the plastid. It localises to the chloroplast. The enzyme catalyses chlorophyllide a + NADP(+) = protochlorophyllide a + NADPH + H(+). Its pathway is porphyrin-containing compound metabolism; chlorophyll biosynthesis. In terms of biological role, phototransformation of protochlorophyllide (Pchlide) to chlorophyllide (Chlide). The chain is Protochlorophyllide reductase, chloroplastic (PORA) from Marchantia paleacea (Liverwort).